Here is a 74-residue protein sequence, read N- to C-terminus: Putative defensin-like protein 128 (74 aa).

The first 24 residues, 1–24 (MSKLTNVVIFIVFFLGMMAKETQG), serve as a signal peptide directing secretion. 4 disulfides stabilise this stretch: cysteine 28-cysteine 72, cysteine 37-cysteine 56, cysteine 42-cysteine 66, and cysteine 46-cysteine 68.

This sequence belongs to the DEFL family.

It is found in the secreted. The sequence is that of Putative defensin-like protein 128 (LCR8) from Arabidopsis thaliana (Mouse-ear cress).